Reading from the N-terminus, the 523-residue chain is 2-isopropylmalate synthase (523 aa).

The Pyruvate carboxyltransferase domain maps to 5 to 267; that stretch reads VIIFDTTLRD…HTAINHQEIW (263 aa). Mn(2+)-binding residues include D14, H202, H204, and N238. Residues 392-523 form a regulatory domain region; the sequence is RLDYFSVQSG…QHNENNKETV (132 aa).

The protein belongs to the alpha-IPM synthase/homocitrate synthase family. LeuA type 1 subfamily. In terms of assembly, homodimer. Mn(2+) is required as a cofactor.

Its subcellular location is the cytoplasm. It catalyses the reaction 3-methyl-2-oxobutanoate + acetyl-CoA + H2O = (2S)-2-isopropylmalate + CoA + H(+). It functions in the pathway amino-acid biosynthesis; L-leucine biosynthesis; L-leucine from 3-methyl-2-oxobutanoate: step 1/4. In terms of biological role, catalyzes the condensation of the acetyl group of acetyl-CoA with 3-methyl-2-oxobutanoate (2-ketoisovalerate) to form 3-carboxy-3-hydroxy-4-methylpentanoate (2-isopropylmalate). The protein is 2-isopropylmalate synthase of Escherichia coli O81 (strain ED1a).